Consider the following 463-residue polypeptide: L-seryl-tRNA(Sec) selenium transferase (463 aa).

N6-(pyridoxal phosphate)lysine is present on K295.

It belongs to the SelA family. Homodecamer; pentamer of dimers. Binds only one seryl-tRNA(Sec) per dimer. Pyridoxal 5'-phosphate serves as cofactor.

The protein resides in the cytoplasm. It catalyses the reaction L-seryl-tRNA(Sec) + selenophosphate + H(+) = L-selenocysteinyl-tRNA(Sec) + phosphate. Its pathway is aminoacyl-tRNA biosynthesis; selenocysteinyl-tRNA(Sec) biosynthesis; selenocysteinyl-tRNA(Sec) from L-seryl-tRNA(Sec) (bacterial route): step 1/1. In terms of biological role, converts seryl-tRNA(Sec) to selenocysteinyl-tRNA(Sec) required for selenoprotein biosynthesis. This chain is L-seryl-tRNA(Sec) selenium transferase, found in Salmonella arizonae (strain ATCC BAA-731 / CDC346-86 / RSK2980).